Consider the following 561-residue polypeptide: Embryonal Fyn-associated substrate (561 aa).

The SH3 domain occupies 5–68 (TSTQLARALY…PANRVKLLPA (64 aa)). Disordered regions lie at residues 68 to 123 (AGPA…CPPS), 171 to 215 (HPLT…PGPP), 240 to 372 (LADG…HNEY), and 390 to 422 (DKAQ…ALSP). The segment covering 103-123 (VPPPARPCPTSGPPAGPCPPS) has biased composition (pro residues). At tyrosine 253 the chain carries Phosphotyrosine; by SRC. Short sequence motifs (SH3-binding) lie at residues 305 to 311 (RPLPALP) and 335 to 341 (RPLPPPP). Residues 308–325 (PALPVPEAPSPSPVPSPA) show a composition bias toward pro residues. The span at 352-372 (VEGDPEGREMEDDPAGHHNEY) shows a compositional bias: basic and acidic residues. A divergent helix-loop-helix motif region spans residues 438–488 (FYAGQCQSHYSALQAAVAALMSSTQANQPPRLFVPHSKRVVVAAHRLVFVG).

Belongs to the CAS family. In terms of processing, phosphorylated on multiple tyrosine residues. Phosphorylated on tyrosines by FYN and SRC. The protein has been detected in lung and placenta.

Docking protein which plays a central coordinating role for tyrosine-kinase-based signaling related to cell adhesion. May serve as an activator of SRC and a downstream effector. Interacts with the SH3 domain of FYN and with CRK, SRC, and YES. The polypeptide is Embryonal Fyn-associated substrate (EFS) (Homo sapiens (Human)).